The following is a 65-amino-acid chain: Small ribosomal subunit protein eS17 (65 aa).

Belongs to the eukaryotic ribosomal protein eS17 family.

This chain is Small ribosomal subunit protein eS17, found in Methanocella arvoryzae (strain DSM 22066 / NBRC 105507 / MRE50).